The following is a 305-amino-acid chain: tRNA dimethylallyltransferase 1 (305 aa).

10 to 17 (GPTASGKT) is a binding site for ATP. 12 to 17 (TASGKT) provides a ligand contact to substrate. The interval 35–38 (DSRQ) is interaction with substrate tRNA.

Belongs to the IPP transferase family. As to quaternary structure, monomer. Mg(2+) is required as a cofactor.

It carries out the reaction adenosine(37) in tRNA + dimethylallyl diphosphate = N(6)-dimethylallyladenosine(37) in tRNA + diphosphate. Catalyzes the transfer of a dimethylallyl group onto the adenine at position 37 in tRNAs that read codons beginning with uridine, leading to the formation of N6-(dimethylallyl)adenosine (i(6)A). The polypeptide is tRNA dimethylallyltransferase 1 (Syntrophus aciditrophicus (strain SB)).